The following is a 452-amino-acid chain: Probable phosphoglucosamine mutase (452 aa).

The Phosphoserine intermediate role is filled by Ser-96. Mg(2+) contacts are provided by Ser-96, Asp-233, Asp-235, and Asp-237. Ser-96 bears the Phosphoserine mark.

Belongs to the phosphohexose mutase family. Requires Mg(2+) as cofactor. Post-translationally, activated by phosphorylation.

The catalysed reaction is alpha-D-glucosamine 1-phosphate = D-glucosamine 6-phosphate. Its function is as follows. Catalyzes the conversion of glucosamine-6-phosphate to glucosamine-1-phosphate. The polypeptide is Probable phosphoglucosamine mutase (Pyrococcus furiosus (strain ATCC 43587 / DSM 3638 / JCM 8422 / Vc1)).